The following is a 195-amino-acid chain: MARCKS-related protein (195 aa).

The interval 1–195 (MGSQSSKAPR…PTPASAEQNE (195 aa)) is disordered. Gly-2 is lipidated: N-myristoyl glycine. At Thr-14 the chain carries Phosphothreonine. Residues 16–26 (EEAAGASPAKA) are compositionally biased toward low complexity. Phosphoserine is present on residues Ser-22, Ser-36, Ser-41, and Ser-48. The span at 53 to 64 (GTDEAAGATGDA) shows a compositional bias: low complexity. Ser-71 carries the post-translational modification Phosphoserine. The segment covering 76-85 (AKGEVPPKET) has biased composition (basic and acidic residues). Thr-85 carries the post-translational modification Phosphothreonine. Residues 86–98 (PKKKKKFSFKKPF) are compositionally biased toward basic residues. The interval 87–110 (KKKKKFSFKKPFKLSGLSFKRNRK) is effector domain involved in lipid-binding and calmodulin-binding. Phosphoserine occurs at positions 93, 101, 104, 119, 120, and 135. The residue at position 148 (Thr-148) is a Phosphothreonine. Ser-151, Ser-162, and Ser-165 each carry phosphoserine. Positions 153–195 (EPQAKGAEASAASEEEAGPQATEPSTPSGPESGPTPASAEQNE) are enriched in low complexity. A phosphothreonine mark is found at Thr-178 and Thr-187.

The protein belongs to the MARCKS family. In terms of assembly, binds to filamentous actin (F-actin), but not to monomeric G-actin, independently of its phosphorylation status. Phosphorylated. Phosphorylation at Ser-120 and Thr-178 is non-redundantly catalyzed by MAPK8 in vivo. Phosphorylation at Thr-148 is preferentially catalyzed by MAPK8 in vivo, but this modification can also be catalyzed by other kinases in the absence of MAPK8. May be phosphorylated by protein kinase C, which disrupts the interaction with calmodulin.

It is found in the cytoplasm. Its subcellular location is the cytoskeleton. The protein resides in the cell membrane. Its function is as follows. Controls cell movement by regulating actin cytoskeleton homeostasis and filopodium and lamellipodium formation. When unphosphorylated, induces cell migration. When phosphorylated by MAPK8, induces actin bundles formation and stabilization, thereby reducing actin plasticity, hence restricting cell movement, including neuronal migration. May be involved in coupling the protein kinase C and calmodulin signal transduction systems. In Homo sapiens (Human), this protein is MARCKS-related protein (MARCKSL1).